Consider the following 227-residue polypeptide: PKHD-type hydroxylase Bamb_4192 (227 aa).

Positions 78–178 constitute a Fe2OG dioxygenase domain; the sequence is KVFPPLFNRY…RVASFFWIQS (101 aa). The Fe cation site is built by His-96, Asp-98, and His-159. Arg-169 serves as a coordination point for 2-oxoglutarate.

The cofactor is Fe(2+). It depends on L-ascorbate as a cofactor.

The sequence is that of PKHD-type hydroxylase Bamb_4192 from Burkholderia ambifaria (strain ATCC BAA-244 / DSM 16087 / CCUG 44356 / LMG 19182 / AMMD) (Burkholderia cepacia (strain AMMD)).